The chain runs to 352 residues: 4-hydroxy-2-oxovalerate aldolase 4 (352 aa).

One can recognise a Pyruvate carboxyltransferase domain in the interval 9-261; sequence IRVTDSSLRD…RTGIDTLKII (253 aa). 17–18 is a substrate binding site; the sequence is RD. Asp-18 contacts Mn(2+). His-21 serves as the catalytic Proton acceptor. Positions 171 and 200 each coordinate substrate. His-200 and His-202 together coordinate Mn(2+). Tyr-291 is a substrate binding site.

Belongs to the 4-hydroxy-2-oxovalerate aldolase family.

The catalysed reaction is (S)-4-hydroxy-2-oxopentanoate = acetaldehyde + pyruvate. This Rhodococcus jostii (strain RHA1) protein is 4-hydroxy-2-oxovalerate aldolase 4.